The chain runs to 532 residues: 2,3-bisphosphoglycerate-independent phosphoglycerate mutase (532 aa).

2 residues coordinate Mn(2+): aspartate 15 and serine 65. Residue serine 65 is the Phosphoserine intermediate of the active site. Substrate contacts are provided by residues histidine 126, 156-157 (RD), arginine 188, arginine 194, 258-261 (RPDR), and lysine 331. 5 residues coordinate Mn(2+): aspartate 398, histidine 402, aspartate 439, histidine 440, and histidine 457.

The protein belongs to the BPG-independent phosphoglycerate mutase family. In terms of assembly, monomer. The cofactor is Mn(2+).

The enzyme catalyses (2R)-2-phosphoglycerate = (2R)-3-phosphoglycerate. It functions in the pathway carbohydrate degradation; glycolysis; pyruvate from D-glyceraldehyde 3-phosphate: step 3/5. In terms of biological role, catalyzes the interconversion of 2-phosphoglycerate and 3-phosphoglycerate. This Rippkaea orientalis (strain PCC 8801 / RF-1) (Cyanothece sp. (strain PCC 8801)) protein is 2,3-bisphosphoglycerate-independent phosphoglycerate mutase.